The following is a 253-amino-acid chain: Succinate dehydrogenase iron-sulfur subunit (253 aa).

Residues Cys64, Cys69, and Cys84 each contribute to the [2Fe-2S] cluster site. In terms of domain architecture, 4Fe-4S ferredoxin-type spans 146-174 (RQWAYELSKCMTCGVCLEACPNVNSKSKF). [4Fe-4S] cluster contacts are provided by Cys155, Cys158, and Cys161. [3Fe-4S] cluster contacts are provided by Cys165, Cys212, and Cys218. Cys222 contributes to the [4Fe-4S] cluster binding site.

Belongs to the succinate dehydrogenase/fumarate reductase iron-sulfur protein family. As to quaternary structure, in B.subtilis succinate dehydrogenase forms part of an enzyme complex containing three subunits: a flavoprotein, an iron-sulfur protein and cytochrome b-558. Requires [2Fe-2S] cluster as cofactor. It depends on [3Fe-4S] cluster as a cofactor. [4Fe-4S] cluster is required as a cofactor.

The catalysed reaction is a quinone + succinate = fumarate + a quinol. It participates in carbohydrate metabolism; tricarboxylic acid cycle; fumarate from succinate (bacterial route): step 1/1. The polypeptide is Succinate dehydrogenase iron-sulfur subunit (sdhB) (Bacillus subtilis (strain 168)).